Reading from the N-terminus, the 163-residue chain is SsrA-binding protein (163 aa).

The protein belongs to the SmpB family.

Its subcellular location is the cytoplasm. Functionally, required for rescue of stalled ribosomes mediated by trans-translation. Binds to transfer-messenger RNA (tmRNA), required for stable association of tmRNA with ribosomes. tmRNA and SmpB together mimic tRNA shape, replacing the anticodon stem-loop with SmpB. tmRNA is encoded by the ssrA gene; the 2 termini fold to resemble tRNA(Ala) and it encodes a 'tag peptide', a short internal open reading frame. During trans-translation Ala-aminoacylated tmRNA acts like a tRNA, entering the A-site of stalled ribosomes, displacing the stalled mRNA. The ribosome then switches to translate the ORF on the tmRNA; the nascent peptide is terminated with the 'tag peptide' encoded by the tmRNA and targeted for degradation. The ribosome is freed to recommence translation, which seems to be the essential function of trans-translation. The polypeptide is SsrA-binding protein (Buchnera aphidicola subsp. Schizaphis graminum (strain Sg)).